Consider the following 340-residue polypeptide: Major histocompatibility complex class I-related gene protein (340 aa).

Residues 1–22 (MGELMAFLLPLIIVLMVKHSNS) form the signal peptide. Residues 23–109 (RTHSLRYFRL…KRLQRHYNHS (87 aa)) are alpha-1. An antigen-binding cleft region spans residues 23–201 (RTHSLRYFRL…EYGKDTLQRT (179 aa)). Topologically, residues 23–302 (RTHSLRYFRL…QESEAIPLVM (280 aa)) are extracellular. Residues Y29 and R31 each contribute to the 8-(9H-purin-6-yl)-2-oxa-8-azabicyclo[3.3.1]nona-3,6-diene-4,6-dicarbaldehyde site. 5-(2-oxoethylideneamino)-6-(D-ribitylamino)uracil-binding residues include R31, S46, and K65. 5-(2-oxopropylideneamino)-6-(D-ribitylamino)uracil is bound by residues R31, S46, and K65. Residues R31, S46, and K65 each contribute to the 7-hydroxy-6-methyl-8-(1-D-ribityl)lumazine site. Residues K65 and H80 each contribute to the 8-(9H-purin-6-yl)-2-oxa-8-azabicyclo[3.3.1]nona-3,6-diene-4,6-dicarbaldehyde site. K65 is a binding site for 2-amino-4-oxopteridine-6-carbaldehyde. A pyridoxal-binding site is contributed by K65. An N-linked (GlcNAc...) asparagine glycan is attached at N107. Positions 110–201 (GSHTYQRMIG…EYGKDTLQRT (92 aa)) are alpha-2. An 8-(9H-purin-6-yl)-2-oxa-8-azabicyclo[3.3.1]nona-3,6-diene-4,6-dicarbaldehyde-binding site is contributed by R116. R116, Y174, and Q175 together coordinate 5-(2-oxoethylideneamino)-6-(D-ribitylamino)uracil. 5-(2-oxopropylideneamino)-6-(D-ribitylamino)uracil-binding residues include R116, Y174, and Q175. The 7-hydroxy-6-methyl-8-(1-D-ribityl)lumazine site is built by R116, Y174, and Q175. Disulfide bonds link C120–C183 and C222–C278. The segment at 202–293 (EPPLVRVNRK…GVHMVLQVPQ (92 aa)) is alpha-3. The 80-residue stretch at 203–282 (PPLVRVNRKE…SNLYSCHVEH (80 aa)) folds into the Ig-like C1-type domain. Positions 294-302 (ESEAIPLVM) are connecting peptide. A helical transmembrane segment spans residues 303-323 (KAVSGSIVFVIVLTGVGVLVW). The Cytoplasmic segment spans residues 324-340 (RRRPREQNGAVYLPTPD).

This sequence belongs to the MHC class I family. In terms of assembly, heterotrimer that consists of MR1, B2M and metabolite antigen. Major classes of metabolite ligands presented by MR1 include riboflavin-related antigens, pyrimidines and ribityl lumazines, nucleobase adducts and folate derivatives. Forms reversible covalent Schiff base complexes with microbial pyrimidine-based metabolite, which serves as a molecular switch triggering complete folding, stable association with B2M and translocation of the ternary complex from endoplasmic reticulum to the plasma membrane. Alternatively, forms non-Schiff base complexes with ribityl lumazines. On antigen-presenting cells, the ternary complex interacts with TCR on MR1-restricted T cells. Interacts with TAPBP and TAPBPL chaperones in the endoplasmic reticulum. TAPBP associated or not with MHC class I peptide loading complex binds ligand-free MR1 or MR1-B2M complex, providing for stable MR1 pools ready for metabolite antigen processing. TAPBPL interacts with MR1 in a ligand-independent way; this interaction may stabilize MR1 pool and facilitate ligand loading and dissociation. Structurally, MR1-B2M heterodimer adopts a topology similar to classical MHC class I molecules, with alpha-1 and alpha-2 domains of MR1 forming the antigen-binding cleft composed of two alpha-helices resting on a floor of 7-stranded anti-parallel beta-pleated sheet. MR1-B2M heterodimer (via alpha-helices) interacts with TCR (via CDR domains). N-glycosylated.

It localises to the cell membrane. Its subcellular location is the endoplasmic reticulum membrane. It is found in the golgi apparatus membrane. The protein localises to the early endosome membrane. The protein resides in the late endosome membrane. Functionally, antigen-presenting molecule specialized in displaying microbial pyrimidine-based metabolites to alpha-beta T cell receptors (TCR) on innate-type mucosal-associated invariant T (MAIT) cells. In complex with B2M preferentially presents riboflavin-derived metabolites to semi-invariant TCRs on MAIT cells, guiding immune surveillance of the microbial metabolome at mucosal epithelial barriers. Signature pyrimidine-based microbial antigens are generated via non-enzymatic condensation of metabolite intermediates of the riboflavin pathway with by-products arising from other metabolic pathways such as glycolysis. Typical potent antigenic metabolites are 5-(2-oxoethylideneamino)-6-D-ribitylaminouracil (5-OE-RU) and 5-(2-oxopropylideneamino)-6-D-ribitylaminouracil (5-OP-RU), products of condensation of 5-amino-6-D-ribityaminouracil (5-A-RU) with glyoxal or methylglyoxal by-products, respectively. May present microbial antigens to various MAIT cell subsets, providing for unique recognition of diverse microbes, including pathogens that do not synthesize riboflavin. Upon antigen recognition, elicits rapid innate-type MAIT cell activation to eliminate pathogenic microbes by directly killing infected cells. During T cell development, drives thymic selection and post-thymic terminal differentiation of MAIT cells in a process dependent on commensal microflora. Acts as an immune sensor of cancer cell metabolome. May present a tumor-specific or -associated metabolite essential for cancer cell survival to a pan-cancer TCR on a non-MAIT CD8-positive T cell clone, triggering T cell-mediated killing of a wide range of cancer cell types. May present tumor-enriched pyridoxal and pyridoxal 5'-phosphate antigens, enabling preferential recognition of cancer cells. Presents nucleobase carbonyl adducts generated during oxidative stress. Captures M3Ade, a nucleobase adduct composed of one adenine modified by a malondialdehyde trimer, for recognition by MR1-restricted T cell clones expressing a polyclonal TCR repertoire. The chain is Major histocompatibility complex class I-related gene protein from Pongo pygmaeus (Bornean orangutan).